A 362-amino-acid chain; its full sequence is Erythritol/L-threitol dehydrogenase (362 aa).

7 residues coordinate Zn(2+): C45, H76, E77, C109, C112, C115, and C123. 2 residues coordinate NAD(+): I195 and D215.

It belongs to the zinc-containing alcohol dehydrogenase family. The cofactor is Zn(2+).

It carries out the reaction erythritol + NAD(+) = D-erythrulose + NADH + H(+). The enzyme catalyses L-threitol + NAD(+) = L-erythrulose + NADH + H(+). It functions in the pathway carbohydrate metabolism; erythritol degradation. Its pathway is carbohydrate metabolism; L-threitol degradation. Catalyzes the NAD-dependent reversible oxidation of erythritol and L-threitol. Involved in the degradation pathways of erythritol and L-threitol, that allow M.smegmatis to grow on these compounds as the sole carbon source. The chain is Erythritol/L-threitol dehydrogenase from Mycolicibacterium smegmatis (strain ATCC 700084 / mc(2)155) (Mycobacterium smegmatis).